Here is a 170-residue protein sequence, read N- to C-terminus: Acireductone dioxygenase (170 aa).

Residues His99, His101, Glu105, and His144 each coordinate Fe(2+). His99, His101, Glu105, and His144 together coordinate Ni(2+).

The protein belongs to the acireductone dioxygenase (ARD) family. In terms of assembly, monomer. The cofactor is Fe(2+). Requires Ni(2+) as cofactor.

It carries out the reaction 1,2-dihydroxy-5-(methylsulfanyl)pent-1-en-3-one + O2 = 3-(methylsulfanyl)propanoate + CO + formate + 2 H(+). The enzyme catalyses 1,2-dihydroxy-5-(methylsulfanyl)pent-1-en-3-one + O2 = 4-methylsulfanyl-2-oxobutanoate + formate + 2 H(+). Its pathway is amino-acid biosynthesis; L-methionine biosynthesis via salvage pathway; L-methionine from S-methyl-5-thio-alpha-D-ribose 1-phosphate: step 5/6. Its function is as follows. Catalyzes 2 different reactions between oxygen and the acireductone 1,2-dihydroxy-3-keto-5-methylthiopentene (DHK-MTPene) depending upon the metal bound in the active site. Fe-containing acireductone dioxygenase (Fe-ARD) produces formate and 2-keto-4-methylthiobutyrate (KMTB), the alpha-ketoacid precursor of methionine in the methionine recycle pathway. Ni-containing acireductone dioxygenase (Ni-ARD) produces methylthiopropionate, carbon monoxide and formate, and does not lie on the methionine recycle pathway. This is Acireductone dioxygenase from Bacillus thuringiensis (strain Al Hakam).